The primary structure comprises 274 residues: uncharacterized protein (274 aa).

This is an uncharacterized protein from Invertebrate iridescent virus 6 (IIV-6).